Reading from the N-terminus, the 429-residue chain is Glucose-1-phosphate adenylyltransferase (429 aa).

Alpha-D-glucose 1-phosphate-binding positions include glycine 162, 177–178, and serine 209; that span reads EK.

This sequence belongs to the bacterial/plant glucose-1-phosphate adenylyltransferase family. Homotetramer.

The catalysed reaction is alpha-D-glucose 1-phosphate + ATP + H(+) = ADP-alpha-D-glucose + diphosphate. Its pathway is glycan biosynthesis; glycogen biosynthesis. Its function is as follows. Involved in the biosynthesis of ADP-glucose, a building block required for the elongation reactions to produce glycogen. Catalyzes the reaction between ATP and alpha-D-glucose 1-phosphate (G1P) to produce pyrophosphate and ADP-Glc. The polypeptide is Glucose-1-phosphate adenylyltransferase (Cyanothece sp. (strain PCC 7425 / ATCC 29141)).